The primary structure comprises 101 residues: Cysteine-rich PDZ-binding protein (101 aa).

It belongs to the CRIPT family. As to quaternary structure, component of the minor spliceosome, which splices U12-type introns.

The protein localises to the cytoplasm. In terms of biological role, as a component of the minor spliceosome, involved in the splicing of U12-type introns in pre-mRNAs. The sequence is that of Cysteine-rich PDZ-binding protein (CRIPT) from Gallus gallus (Chicken).